Reading from the N-terminus, the 552-residue chain is Probable acyl-activating enzyme 5, peroxisomal (552 aa).

Positions 550–552 match the Microbody targeting signal motif; sequence SRM.

It belongs to the ATP-dependent AMP-binding enzyme family. Expressed in roots, stems and developing seeds.

It is found in the peroxisome. May act as an acid--thiol ligase that activates carboxylic acids by forming acyl-CoAs. This chain is Probable acyl-activating enzyme 5, peroxisomal (AAE5), found in Arabidopsis thaliana (Mouse-ear cress).